Here is a 342-residue protein sequence, read N- to C-terminus: S-adenosylmethionine:tRNA ribosyltransferase-isomerase (342 aa).

This sequence belongs to the QueA family. As to quaternary structure, monomer.

The protein localises to the cytoplasm. The catalysed reaction is 7-aminomethyl-7-carbaguanosine(34) in tRNA + S-adenosyl-L-methionine = epoxyqueuosine(34) in tRNA + adenine + L-methionine + 2 H(+). The protein operates within tRNA modification; tRNA-queuosine biosynthesis. Functionally, transfers and isomerizes the ribose moiety from AdoMet to the 7-aminomethyl group of 7-deazaguanine (preQ1-tRNA) to give epoxyqueuosine (oQ-tRNA). This chain is S-adenosylmethionine:tRNA ribosyltransferase-isomerase, found in Geobacillus sp. (strain WCH70).